Consider the following 80-residue polypeptide: MKKDIHPEYRPVVFMDTTTGYQFLSGSTKRSNETVEFEGETYPLIRVEISSDSHPFYTGRQKFTQADGRVDRFNKKYGLK.

It belongs to the bacterial ribosomal protein bL31 family. Type B subfamily. As to quaternary structure, part of the 50S ribosomal subunit.

The chain is Large ribosomal subunit protein bL31B from Streptococcus pneumoniae serotype 2 (strain D39 / NCTC 7466).